Here is a 255-residue protein sequence, read N- to C-terminus: Aliphatic sulfonates import ATP-binding protein SsuB (255 aa).

The region spanning 12–233 (LLLNAVSKHY…RLGSVRLAEL (222 aa)) is the ABC transporter domain. 44 to 51 (GRSGGGKS) is an ATP binding site.

Belongs to the ABC transporter superfamily. Aliphatic sulfonates importer (TC 3.A.1.17.2) family. In terms of assembly, the complex is composed of two ATP-binding proteins (SsuB), two transmembrane proteins (SsuC) and a solute-binding protein (SsuA).

The protein resides in the cell inner membrane. The enzyme catalyses ATP + H2O + aliphatic sulfonate-[sulfonate-binding protein]Side 1 = ADP + phosphate + aliphatic sulfonateSide 2 + [sulfonate-binding protein]Side 1.. Part of the ABC transporter complex SsuABC involved in aliphatic sulfonates import. Responsible for energy coupling to the transport system. The chain is Aliphatic sulfonates import ATP-binding protein SsuB from Shigella sonnei (strain Ss046).